The primary structure comprises 364 residues: Uroporphyrinogen decarboxylase (364 aa).

Substrate-binding positions include 28–32 (RQAGR), aspartate 78, tyrosine 160, threonine 215, and histidine 333.

This sequence belongs to the uroporphyrinogen decarboxylase family. As to quaternary structure, homodimer.

The protein resides in the cytoplasm. The catalysed reaction is uroporphyrinogen III + 4 H(+) = coproporphyrinogen III + 4 CO2. It functions in the pathway porphyrin-containing compound metabolism; protoporphyrin-IX biosynthesis; coproporphyrinogen-III from 5-aminolevulinate: step 4/4. Catalyzes the decarboxylation of four acetate groups of uroporphyrinogen-III to yield coproporphyrinogen-III. The polypeptide is Uroporphyrinogen decarboxylase (Burkholderia cenocepacia (strain ATCC BAA-245 / DSM 16553 / LMG 16656 / NCTC 13227 / J2315 / CF5610) (Burkholderia cepacia (strain J2315))).